A 1432-amino-acid chain; its full sequence is Superkiller protein 3 (1432 aa).

TPR repeat units follow at residues 4-37 (IKQL…DPDN) and 47-80 (ALSS…VPDN). The interval 339–397 (SANKPPEGHKKTEKETDIKDVDETNEDEVKDRVEDEVKDRVEDEVKDQDEEAKEDEEED) is disordered. Positions 344-381 (PEGHKKTEKETDIKDVDETNEDEVKDRVEDEVKDRVED) are enriched in basic and acidic residues. Over residues 382–397 (EVKDQDEEAKEDEEED) the composition is skewed to acidic residues. TPR repeat units lie at residues 425–458 (ILAH…IAYN), 471–507 (REFS…DFSN), 508–541 (IQAK…SPNN), 627–661 (APGF…DAGD), 702–735 (NWPF…DPND), 736–769 (VESW…RPSH), 945–985 (ASYW…QSNT), 987–1018 (ETWI…EPKA), and 1226–1259 (ISNH…SKDS).

The protein belongs to the SKI3 family. Component of the SKI complex composed of at least SKI2, SKI3 and SKI8. The SKI complex interacts with SKI7, which makes the link between the SKI complex and the exosome in order to perform mRNA degradation.

Its subcellular location is the cytoplasm. The protein localises to the nucleus. In terms of biological role, component of the SKI complex involved in 3'-mRNA degradation pathway. Represses dsRNA virus propagation by specifically blocking translation of viral mRNAs, perhaps recognizing the absence of CAP or poly(A). Essential for cell growth only in the presence of M1 replicon. This is Superkiller protein 3 (SKI3) from Saccharomyces cerevisiae (strain ATCC 204508 / S288c) (Baker's yeast).